We begin with the raw amino-acid sequence, 281 residues long: UPF0750 membrane protein YvjA (281 aa).

5 helical membrane-spanning segments follow: residues 14 to 34 (YVYI…FLLP), 56 to 76 (AAYV…ILLG), 77 to 97 (GKFG…VFLT), 108 to 128 (LLAA…VYLG), and 149 to 169 (SLGK…MIVF).

Belongs to the UPF0750 family.

Its subcellular location is the cell membrane. This Bacillus subtilis (strain 168) protein is UPF0750 membrane protein YvjA (yvjA).